Consider the following 179-residue polypeptide: Low molecular weight phosphotyrosine protein phosphatase (179 aa).

C15 (nucleophile) is an active-site residue. Residue R21 is part of the active site. D148 functions as the Proton donor in the catalytic mechanism.

It belongs to the low molecular weight phosphotyrosine protein phosphatase family.

It localises to the cytoplasm. The enzyme catalyses O-phospho-L-tyrosyl-[protein] + H2O = L-tyrosyl-[protein] + phosphate. The catalysed reaction is a phosphate monoester + H2O = an alcohol + phosphate. Functionally, acts on tyrosine phosphorylated proteins, low-MW aryl phosphates and natural and synthetic acyl phosphates. This Dictyostelium discoideum (Social amoeba) protein is Low molecular weight phosphotyrosine protein phosphatase (acp1).